A 445-amino-acid chain; its full sequence is Phosphoglucosamine mutase (445 aa).

S101 functions as the Phosphoserine intermediate in the catalytic mechanism. Mg(2+)-binding residues include S101, D240, D242, and D244. S101 is modified (phosphoserine).

The protein belongs to the phosphohexose mutase family. The cofactor is Mg(2+). Post-translationally, activated by phosphorylation.

It catalyses the reaction alpha-D-glucosamine 1-phosphate = D-glucosamine 6-phosphate. Its function is as follows. Catalyzes the conversion of glucosamine-6-phosphate to glucosamine-1-phosphate. The protein is Phosphoglucosamine mutase of Pseudomonas fluorescens (strain ATCC BAA-477 / NRRL B-23932 / Pf-5).